The chain runs to 468 residues: Adenylyltransferase and sulfurtransferase MOCS3-1 (468 aa).

ATP is bound by residues G111, D132, 139–143, K156, and 200–201; these read NNLHR and DN. Residues C241 and C244 each coordinate Zn(2+). The active-site Glycyl thioester intermediate; for adenylyltransferase activity is the C258. Zn(2+)-binding residues include C316 and C319. Positions 371–466 constitute a Rhodanese domain; the sequence is DGEPHLLLDV…WGRDVDPDFP (96 aa). C426 (cysteine persulfide intermediate; for sulfurtransferase activity) is an active-site residue.

In the N-terminal section; belongs to the HesA/MoeB/ThiF family. UBA4 subfamily. Zn(2+) serves as cofactor.

The protein resides in the cytoplasm. The enzyme catalyses [molybdopterin-synthase sulfur-carrier protein]-C-terminal Gly-Gly + ATP + H(+) = [molybdopterin-synthase sulfur-carrier protein]-C-terminal Gly-Gly-AMP + diphosphate. It catalyses the reaction [molybdopterin-synthase sulfur-carrier protein]-C-terminal Gly-Gly-AMP + S-sulfanyl-L-cysteinyl-[cysteine desulfurase] + AH2 = [molybdopterin-synthase sulfur-carrier protein]-C-terminal-Gly-aminoethanethioate + L-cysteinyl-[cysteine desulfurase] + A + AMP + 2 H(+). It functions in the pathway tRNA modification; 5-methoxycarbonylmethyl-2-thiouridine-tRNA biosynthesis. The protein operates within cofactor biosynthesis; molybdopterin biosynthesis. Its function is as follows. Plays a central role in 2-thiolation of mcm(5)S(2)U at tRNA wobble positions of cytosolic tRNA(Lys), tRNA(Glu) and tRNA(Gln). Also essential during biosynthesis of the molybdenum cofactor. Acts by mediating the C-terminal thiocarboxylation of sulfur carriers URM1 and MOCS2A. Its N-terminus first activates URM1 and MOCS2A as acyl-adenylates (-COAMP), then the persulfide sulfur on the catalytic cysteine is transferred to URM1 and MOCS2A to form thiocarboxylation (-COSH) of their C-terminus. The reaction probably involves hydrogen sulfide that is generated from the persulfide intermediate and that acts as a nucleophile towards URM1 and MOCS2A. Subsequently, a transient disulfide bond is formed. Does not use thiosulfate as sulfur donor; NFS1 probably acting as a sulfur donor for thiocarboxylation reactions. The chain is Adenylyltransferase and sulfurtransferase MOCS3-1 from Zea mays (Maize).